Reading from the N-terminus, the 441-residue chain is Damage-control phosphatase ARMT1 (441 aa).

Position 2 is an N-acetylalanine (alanine 2). Lysine 40 carries the post-translational modification N6-acetyllysine. Serine 102 is subject to Phosphoserine. Aspartate 253 and asparagine 254 together coordinate Mn(2+). Aspartate 253 to asparagine 254 contributes to the substrate binding site. The S-adenosyl-L-methionine site is built by glutamate 258 and aspartate 291. Aspartate 291 provides a ligand contact to Mn(2+). Residues aspartate 367–arginine 371 and lysine 404 each bind substrate. A Subfamily III RTxK motif motif is present at residues arginine 401–lysine 404.

Belongs to the damage-control phosphatase family. Sugar phosphate phosphatase III subfamily. Mn(2+) serves as cofactor. Ni(2+) is required as a cofactor. Post-translationally, automethylated.

The enzyme catalyses beta-D-fructose 1-phosphate + H2O = D-fructose + phosphate. The catalysed reaction is beta-D-fructose 6-phosphate = dihydroxyacetone + D-glyceraldehyde 3-phosphate. It carries out the reaction L-glutamyl-[protein] + S-adenosyl-L-methionine = [protein]-L-glutamate 5-O-methyl ester + S-adenosyl-L-homocysteine. In terms of biological role, metal-dependent phosphatase that shows phosphatase activity against several substrates, including fructose-1-phosphate and fructose-6-phosphate. Its preference for fructose-1-phosphate, a strong glycating agent that causes DNA damage rather than a canonical yeast metabolite, suggests a damage-control function in hexose phosphate metabolism. Has also been shown to have O-methyltransferase activity that methylates glutamate residues of target proteins to form gamma-glutamyl methyl ester residues. Possibly methylates PCNA, suggesting it is involved in the DNA damage response. The chain is Damage-control phosphatase ARMT1 from Macaca fascicularis (Crab-eating macaque).